The chain runs to 338 residues: 4-hydroxy-3-methylbut-2-enyl diphosphate reductase (338 aa).

C21 is a binding site for [4Fe-4S] cluster. Residues H50 and H83 each contribute to the (2E)-4-hydroxy-3-methylbut-2-enyl diphosphate site. 2 residues coordinate dimethylallyl diphosphate: H50 and H83. Positions 50 and 83 each coordinate isopentenyl diphosphate. Position 105 (C105) interacts with [4Fe-4S] cluster. H133 lines the (2E)-4-hydroxy-3-methylbut-2-enyl diphosphate pocket. H133 serves as a coordination point for dimethylallyl diphosphate. Residue H133 coordinates isopentenyl diphosphate. The Proton donor role is filled by E135. (2E)-4-hydroxy-3-methylbut-2-enyl diphosphate is bound at residue T173. C203 provides a ligand contact to [4Fe-4S] cluster. (2E)-4-hydroxy-3-methylbut-2-enyl diphosphate is bound by residues S231, S232, N233, and S276. Dimethylallyl diphosphate contacts are provided by S231, S232, N233, and S276. The isopentenyl diphosphate site is built by S231, S232, N233, and S276.

This sequence belongs to the IspH family. [4Fe-4S] cluster serves as cofactor.

The catalysed reaction is isopentenyl diphosphate + 2 oxidized [2Fe-2S]-[ferredoxin] + H2O = (2E)-4-hydroxy-3-methylbut-2-enyl diphosphate + 2 reduced [2Fe-2S]-[ferredoxin] + 2 H(+). It carries out the reaction dimethylallyl diphosphate + 2 oxidized [2Fe-2S]-[ferredoxin] + H2O = (2E)-4-hydroxy-3-methylbut-2-enyl diphosphate + 2 reduced [2Fe-2S]-[ferredoxin] + 2 H(+). The protein operates within isoprenoid biosynthesis; dimethylallyl diphosphate biosynthesis; dimethylallyl diphosphate from (2E)-4-hydroxy-3-methylbutenyl diphosphate: step 1/1. It participates in isoprenoid biosynthesis; isopentenyl diphosphate biosynthesis via DXP pathway; isopentenyl diphosphate from 1-deoxy-D-xylulose 5-phosphate: step 6/6. Functionally, catalyzes the conversion of 1-hydroxy-2-methyl-2-(E)-butenyl 4-diphosphate (HMBPP) into a mixture of isopentenyl diphosphate (IPP) and dimethylallyl diphosphate (DMAPP). Acts in the terminal step of the DOXP/MEP pathway for isoprenoid precursor biosynthesis. In Streptomyces coelicolor (strain ATCC BAA-471 / A3(2) / M145), this protein is 4-hydroxy-3-methylbut-2-enyl diphosphate reductase.